The following is a 150-amino-acid chain: D-aminoacyl-tRNA deacylase (150 aa).

A Gly-cisPro motif, important for rejection of L-amino acids motif is present at residues 138-139 (GP).

The protein belongs to the DTD family. As to quaternary structure, homodimer.

The protein resides in the cytoplasm. The enzyme catalyses glycyl-tRNA(Ala) + H2O = tRNA(Ala) + glycine + H(+). The catalysed reaction is a D-aminoacyl-tRNA + H2O = a tRNA + a D-alpha-amino acid + H(+). Functionally, an aminoacyl-tRNA editing enzyme that deacylates mischarged D-aminoacyl-tRNAs. Also deacylates mischarged glycyl-tRNA(Ala), protecting cells against glycine mischarging by AlaRS. Acts via tRNA-based rather than protein-based catalysis; rejects L-amino acids rather than detecting D-amino acids in the active site. By recycling D-aminoacyl-tRNA to D-amino acids and free tRNA molecules, this enzyme counteracts the toxicity associated with the formation of D-aminoacyl-tRNA entities in vivo and helps enforce protein L-homochirality. The protein is D-aminoacyl-tRNA deacylase of Bacteroides fragilis (strain YCH46).